Here is a 125-residue protein sequence, read N- to C-terminus: Napin-3 (125 aa).

4 disulfide bridges follow: Cys10–Cys62, Cys23–Cys51, Cys52–Cys107, and Cys64–Cys115.

Belongs to the 2S seed storage albumins family. The mature protein consists of a small and a large chain linked by disulfide bonds.

The small, basic, water-soluble napins are one of the two major kinds of storage proteins synthesized in the seed during its maturation. The polypeptide is Napin-3 (Brassica napus (Rape)).